An 87-amino-acid chain; its full sequence is Tan_10cys (87 aa).

A signal peptide spans 1-21 (MNLKVLFLLAMVLVTLCLGED). Positions 22 to 27 (RVTDRR) are excised as a propeptide.

This sequence belongs to the teretoxin C (TC) superfamily. Post-translationally, contains 5 disulfide bonds. Expressed by the venom duct.

The protein localises to the secreted. The polypeptide is Tan_10cys (Terebra anilis (Auger snail)).